A 101-amino-acid polypeptide reads, in one-letter code: Small ribosomal subunit protein bS18c (101 aa).

Positions 1–19 (MNKSKRPFTKSKRSFRRRL) are enriched in basic residues. The segment at 1–20 (MNKSKRPFTKSKRSFRRRLP) is disordered.

It belongs to the bacterial ribosomal protein bS18 family. As to quaternary structure, part of the 30S ribosomal subunit.

The protein resides in the plastid. It is found in the chloroplast. This Arabis hirsuta (Hairy rock-cress) protein is Small ribosomal subunit protein bS18c.